A 233-amino-acid chain; its full sequence is Cytidylate kinase (233 aa).

Residue 15 to 23 (GPSGAGKSS) participates in ATP binding. The span at 183-200 (QRDRQDEGREHAPLKQAE) shows a compositional bias: basic and acidic residues. The interval 183–203 (QRDRQDEGREHAPLKQAEDAV) is disordered.

Belongs to the cytidylate kinase family. Type 1 subfamily.

It is found in the cytoplasm. It catalyses the reaction CMP + ATP = CDP + ADP. It carries out the reaction dCMP + ATP = dCDP + ADP. The protein is Cytidylate kinase of Geobacter sp. (strain M21).